Reading from the N-terminus, the 235-residue chain is 5'-methylthioadenosine/S-adenosylhomocysteine nucleosidase (235 aa).

Glutamate 12 acts as the Proton acceptor in catalysis. Substrate-binding positions include glycine 78, isoleucine 152, and 173 to 174 (ME). Aspartate 197 (proton donor) is an active-site residue.

This sequence belongs to the PNP/UDP phosphorylase family. MtnN subfamily. As to quaternary structure, homodimer.

It catalyses the reaction S-adenosyl-L-homocysteine + H2O = S-(5-deoxy-D-ribos-5-yl)-L-homocysteine + adenine. It carries out the reaction S-methyl-5'-thioadenosine + H2O = 5-(methylsulfanyl)-D-ribose + adenine. The catalysed reaction is 5'-deoxyadenosine + H2O = 5-deoxy-D-ribose + adenine. It functions in the pathway amino-acid biosynthesis; L-methionine biosynthesis via salvage pathway; S-methyl-5-thio-alpha-D-ribose 1-phosphate from S-methyl-5'-thioadenosine (hydrolase route): step 1/2. Catalyzes the irreversible cleavage of the glycosidic bond in both 5'-methylthioadenosine (MTA) and S-adenosylhomocysteine (SAH/AdoHcy) to adenine and the corresponding thioribose, 5'-methylthioribose and S-ribosylhomocysteine, respectively. Also cleaves 5'-deoxyadenosine, a toxic by-product of radical S-adenosylmethionine (SAM) enzymes, into 5-deoxyribose and adenine. Thus, is required for in vivo function of the radical SAM enzymes biotin synthase and lipoic acid synthase, that are inhibited by 5'-deoxyadenosine accumulation. This is 5'-methylthioadenosine/S-adenosylhomocysteine nucleosidase from Proteus mirabilis (strain HI4320).